Reading from the N-terminus, the 171-residue chain is Adenine phosphoribosyltransferase (171 aa).

It belongs to the purine/pyrimidine phosphoribosyltransferase family. Homodimer.

The protein localises to the cytoplasm. It carries out the reaction AMP + diphosphate = 5-phospho-alpha-D-ribose 1-diphosphate + adenine. It functions in the pathway purine metabolism; AMP biosynthesis via salvage pathway; AMP from adenine: step 1/1. Functionally, catalyzes a salvage reaction resulting in the formation of AMP, that is energically less costly than de novo synthesis. The protein is Adenine phosphoribosyltransferase of Ruminiclostridium cellulolyticum (strain ATCC 35319 / DSM 5812 / JCM 6584 / H10) (Clostridium cellulolyticum).